We begin with the raw amino-acid sequence, 371 residues long: Putative glutamate--cysteine ligase 2 (371 aa).

This sequence belongs to the glutamate--cysteine ligase type 2 family. YbdK subfamily. As to quaternary structure, homodimer.

It catalyses the reaction L-cysteine + L-glutamate + ATP = gamma-L-glutamyl-L-cysteine + ADP + phosphate + H(+). In terms of biological role, ATP-dependent carboxylate-amine ligase which exhibits weak glutamate--cysteine ligase activity. The polypeptide is Putative glutamate--cysteine ligase 2 (Cronobacter sakazakii (strain ATCC BAA-894) (Enterobacter sakazakii)).